The chain runs to 774 residues: Probable ubiquitin-like-specific protease 2A (774 aa).

The interval 118–141 (SSLSENDEVSTGEATNPASDPHEV) is disordered. Residues histidine 400, aspartate 430, and cysteine 485 contribute to the active site. The disordered stretch occupies residues 548-568 (ILPANSKSEPPHCGVSNRNDQ).

This sequence belongs to the peptidase C48 family.

Its function is as follows. Protease that catalyzes two essential functions in the SUMO pathway: processing of full-length SUMOs to their mature forms and deconjugation of SUMO from targeted proteins. The chain is Probable ubiquitin-like-specific protease 2A (ULP2A) from Arabidopsis thaliana (Mouse-ear cress).